We begin with the raw amino-acid sequence, 329 residues long: tRNA-modifying protein YgfZ (329 aa).

Positions 27 and 189 each coordinate folate.

This sequence belongs to the tRNA-modifying YgfZ family.

The protein localises to the cytoplasm. Functionally, folate-binding protein involved in regulating the level of ATP-DnaA and in the modification of some tRNAs. It is probably a key factor in regulatory networks that act via tRNA modification, such as initiation of chromosomal replication. This is tRNA-modifying protein YgfZ from Cronobacter sakazakii (strain ATCC BAA-894) (Enterobacter sakazakii).